A 348-amino-acid chain; its full sequence is D-alanine--D-alanine ligase (348 aa).

Positions 132–334 constitute an ATP-grasp domain; it reads KRVLESAGIP…YSDLIEELVS (203 aa). An ATP-binding site is contributed by 162 to 217; that stretch reads LETLSFPIFVKPANMGSSVGISKAESIEGLREAIALALKYDSRILIEQGVVAREIE. Mg(2+) is bound by residues D288, E301, and N303.

This sequence belongs to the D-alanine--D-alanine ligase family. Mg(2+) serves as cofactor. The cofactor is Mn(2+).

Its subcellular location is the cytoplasm. The catalysed reaction is 2 D-alanine + ATP = D-alanyl-D-alanine + ADP + phosphate + H(+). It participates in cell wall biogenesis; peptidoglycan biosynthesis. Functionally, cell wall formation. In Streptococcus uberis (strain ATCC BAA-854 / 0140J), this protein is D-alanine--D-alanine ligase.